We begin with the raw amino-acid sequence, 330 residues long: Putative protein DDB_G0285185 (330 aa).

Residues 212 to 240 (NKLQNQVQSSPKLSSPITKNKEQIVSTTS) form a disordered region. Positions 214–240 (LQNQVQSSPKLSSPITKNKEQIVSTTS) are enriched in polar residues.

The chain is Putative protein DDB_G0285185 from Dictyostelium discoideum (Social amoeba).